A 590-amino-acid chain; its full sequence is Neuronal PAS domain-containing protein 1 (590 aa).

The bHLH domain maps to 45-98 (QRKEKSRNAARSRRGKENLEFFELAKLLPLPGAISSQLDKASIVRLSVTYLRLR). The PAS 1 domain maps to 135–207 (EQHLGGHILQ…LGLRTPTPGP (73 aa)). The interval 198–229 (LGLRTPTPGPPTPPSVSSSSSSSSSLADTPEI) is disordered. Over residues 212–222 (SVSSSSSSSSS) the composition is skewed to low complexity. Residues 293–359 (APLAELPLHG…IRQSHVDLLD (67 aa)) form the PAS 2 domain. The region spanning 365–408 (TGYYRWLQRAGGFVWLQSVATVAGSGKSPGEHHVLWVSHVLSQA) is the PAC domain. The interval 425–494 (ACEEASSPGP…SHPATPRPEF (70 aa)) is disordered. A compositionally biased stretch (pro residues) spans 433-442 (GPEPTEPEPP). Residues 463 to 476 (IKVEPGPRETKGSE) are compositionally biased toward basic and acidic residues.

As to quaternary structure, efficient DNA binding requires dimerization with another bHLH protein. Interacts with ARNT; forms a heterodimer that binds core DNA sequence 5'-[AG]CGTG-3' within the hypoxia response element (HRE) leading to a transcriptional repressor on its target gene TH.

It localises to the nucleus. May control regulatory pathways relevant to schizophrenia and to psychotic illness. May play a role in late central nervous system development by modulating EPO expression in response to cellular oxygen level. Forms a heterodimer that binds core DNA sequence 5'-TACGTG-3' within the hypoxia response element (HRE) leading to transcriptional repression on its target gene TH. In Homo sapiens (Human), this protein is Neuronal PAS domain-containing protein 1 (NPAS1).